Here is a 56-residue protein sequence, read N- to C-terminus: Large ribosomal subunit protein eL24 (56 aa).

The Zn(2+) site is built by Cys6, Cys9, Cys32, and Cys36. A C4-type zinc finger spans residues 6 to 36; that stretch reads CSFCNTRITPGTGKLYAKKDGTVYYFCSSKC.

The protein belongs to the eukaryotic ribosomal protein eL24 family. Part of the 50S ribosomal subunit. Forms a cluster with proteins L3 and L14. The cofactor is Zn(2+).

Its function is as follows. Binds to the 23S rRNA. The polypeptide is Large ribosomal subunit protein eL24 (Methanothrix thermoacetophila (strain DSM 6194 / JCM 14653 / NBRC 101360 / PT) (Methanosaeta thermophila)).